Here is a 634-residue protein sequence, read N- to C-terminus: ATP-dependent zinc metalloprotease FtsH (634 aa).

Residues 1 to 5 (MNALK) lie on the Cytoplasmic side of the membrane. Residues 6–26 (NFFIWAIIIGAAIVAFNLFEG) form a helical membrane-spanning segment. Residues 27–100 (KREFTTKVSL…VANPEPPGGW (74 aa)) are Periplasmic-facing. The chain crosses the membrane as a helical span at residues 101 to 121 (LVNVFLSWLPILFFIGIWIFL). The Cytoplasmic segment spans residues 122–634 (LRQMSGGGNV…KSEEVKEEVV (513 aa)). Position 195–202 (195–202 (GEPGVGKT)) interacts with ATP. A Zn(2+)-binding site is contributed by His418. Glu419 is a catalytic residue. Residues His422 and Asp496 each coordinate Zn(2+). A disordered region spans residues 615–634 (DRKSEENKELKSEEVKEEVV).

In the central section; belongs to the AAA ATPase family. This sequence in the C-terminal section; belongs to the peptidase M41 family. As to quaternary structure, the isolated protease domain (residues 405-634) forms a stable hexamer. It depends on Zn(2+) as a cofactor.

It is found in the cell inner membrane. Its function is as follows. Acts as a processive, ATP-dependent zinc metallopeptidase for both cytoplasmic and membrane proteins. Plays a role in the quality control of integral membrane proteins. The chain is ATP-dependent zinc metalloprotease FtsH from Aquifex aeolicus (strain VF5).